The following is a 153-amino-acid chain: Biogenesis of lysosome-related organelles complex 1 subunit 1 (153 aa).

The segment covering 1-11 has biased composition (basic and acidic residues); that stretch reads MAPGSRGERSS. Residues 1 to 27 are disordered; it reads MAPGSRGERSSFRSRRGPGVPSPQPDV. A coiled-coil region spans residues 27–59; sequence VTMLSRLLKEHQAKQNERKELQEKRRREAITAA.

The protein belongs to the BLOC1S1 family. In terms of assembly, component of the biogenesis of lysosome-related organelles complex 1 (BLOC-1) composed of BLOC1S1, BLOC1S2, BLOC1S3, BLOC1S4, BLOC1S5, BLOC1S6, DTNBP1/BLOC1S7 and SNAPIN/BLOC1S8. Octamer composed of one copy each BLOC1S1, BLOC1S2, BLOC1S3, BLOC1S4, BLOC1S5, BLOC1S6, DTNBP1/BLOC1S7 and SNAPIN/BLOC1S8. The BLOC-1 complex associates with the AP-3 protein complex and membrane protein cargos. Component of the BLOC-one-related complex (BORC) which is composed of BLOC1S1, BLOC1S2, BORCS5, BORCS6, BORCS7, BORCS8, KXD1 and SNAPIN. Interacts with ATP5F1A and NDUFA9; involved in their acetylation on lysine residues. Interacts with KXD1.

The protein localises to the mitochondrion intermembrane space. It is found in the mitochondrion matrix. Its subcellular location is the cytoplasm. The protein resides in the cytosol. It localises to the lysosome membrane. The catalysed reaction is L-lysyl-[protein] + acetyl-CoA = N(6)-acetyl-L-lysyl-[protein] + CoA + H(+). Component of the BLOC-1 complex, a complex that is required for normal biogenesis of lysosome-related organelles (LRO), such as platelet dense granules and melanosomes. In concert with the AP-3 complex, the BLOC-1 complex is required to target membrane protein cargos into vesicles assembled at cell bodies for delivery into neurites and nerve terminals. The BLOC-1 complex, in association with SNARE proteins, is also proposed to be involved in neurite extension. As part of the BORC complex may play a role in lysosomes movement and localization at the cell periphery. Associated with the cytosolic face of lysosomes, the BORC complex may recruit ARL8B and couple lysosomes to microtubule plus-end-directed kinesin motor. Its function is as follows. Acts as a protein acetyltransferase. Negatively regulates aerobic respiration through mitochondrial protein lysine-acetylation. May counteract the action of the deacetylase SIRT3 by acetylating and regulating proteins of the mitochondrial respiratory chain including ATP5F1A and NDUFA9. Acts as a regulator of mTORC2 signaling in response to hypotoxic stress by mediating acetylation of RICTOR, thereby protecting RICTOR against ubiquitination and subsequent degradation by the proteasome. This Homo sapiens (Human) protein is Biogenesis of lysosome-related organelles complex 1 subunit 1 (BLOC1S1).